A 62-amino-acid polypeptide reads, in one-letter code: Snaclec aspercetin subunit beta (62 aa).

Cys2 and Cys13 are oxidised to a cystine. The region spanning 9 to 62 is the C-type lectin domain; that stretch reads YEGHCYRVFKPPKDWADAERFCSQQAKGGHLVSIERFGREDFVSNLITKNLQRG.

Belongs to the snaclec family. In terms of assembly, heterodimer; disulfide-linked. Expressed by the venom gland.

The protein resides in the secreted. In terms of biological role, snaclec that binds to von Willebrand factor (VWF) and induces its interaction with GPIbalpha (GP1BA) (via the vWF A1 domain), resulting in platelet aggregation. Intramuscular and intravenous injections in mice induce a dose-dependent drop in platelet count (thrombocytopenia). Pretreatment by intravenous injection by this protein in mice potentiates the hemorrhagic lesion in the skin provoked by the metalloproteinase BaP1 intradermally injected. This result is not observed when both BaP1 and this protein are injected simultaneously. The protein is Snaclec aspercetin subunit beta of Bothrops asper (Terciopelo).